The sequence spans 505 residues: Histidine ammonia-lyase (505 aa).

The segment at residues 141–143 (ASG) is a cross-link (5-imidazolinone (Ala-Gly)). At Ser142 the chain carries 2,3-didehydroalanine (Ser).

Belongs to the PAL/histidase family. Post-translationally, contains an active site 4-methylidene-imidazol-5-one (MIO), which is formed autocatalytically by cyclization and dehydration of residues Ala-Ser-Gly.

It localises to the cytoplasm. The catalysed reaction is L-histidine = trans-urocanate + NH4(+). It functions in the pathway amino-acid degradation; L-histidine degradation into L-glutamate; N-formimidoyl-L-glutamate from L-histidine: step 1/3. The polypeptide is Histidine ammonia-lyase (Bacillus thuringiensis (strain Al Hakam)).